A 181-amino-acid polypeptide reads, in one-letter code: ATP-dependent protease subunit HslV (181 aa).

Threonine 11 is an active-site residue. 3 residues coordinate Na(+): alanine 166, cysteine 169, and threonine 172.

It belongs to the peptidase T1B family. HslV subfamily. In terms of assembly, a double ring-shaped homohexamer of HslV is capped on each side by a ring-shaped HslU homohexamer. The assembly of the HslU/HslV complex is dependent on binding of ATP.

The protein localises to the cytoplasm. The enzyme catalyses ATP-dependent cleavage of peptide bonds with broad specificity.. With respect to regulation, allosterically activated by HslU binding. In terms of biological role, protease subunit of a proteasome-like degradation complex believed to be a general protein degrading machinery. In Chlorobaculum tepidum (strain ATCC 49652 / DSM 12025 / NBRC 103806 / TLS) (Chlorobium tepidum), this protein is ATP-dependent protease subunit HslV.